We begin with the raw amino-acid sequence, 498 residues long: Protein nucleotidyltransferase YdiU (498 aa).

ATP-binding residues include Gly-88, Gly-90, Arg-91, Lys-111, Asp-123, Gly-124, Arg-174, and Arg-181. The active-site Proton acceptor is Asp-250. The Mg(2+) site is built by Asn-251 and Asp-260. Asp-260 provides a ligand contact to ATP.

This sequence belongs to the SELO family. Requires Mg(2+) as cofactor. Mn(2+) serves as cofactor.

It catalyses the reaction L-seryl-[protein] + ATP = 3-O-(5'-adenylyl)-L-seryl-[protein] + diphosphate. It carries out the reaction L-threonyl-[protein] + ATP = 3-O-(5'-adenylyl)-L-threonyl-[protein] + diphosphate. The enzyme catalyses L-tyrosyl-[protein] + ATP = O-(5'-adenylyl)-L-tyrosyl-[protein] + diphosphate. The catalysed reaction is L-histidyl-[protein] + UTP = N(tele)-(5'-uridylyl)-L-histidyl-[protein] + diphosphate. It catalyses the reaction L-seryl-[protein] + UTP = O-(5'-uridylyl)-L-seryl-[protein] + diphosphate. It carries out the reaction L-tyrosyl-[protein] + UTP = O-(5'-uridylyl)-L-tyrosyl-[protein] + diphosphate. Nucleotidyltransferase involved in the post-translational modification of proteins. It can catalyze the addition of adenosine monophosphate (AMP) or uridine monophosphate (UMP) to a protein, resulting in modifications known as AMPylation and UMPylation. The chain is Protein nucleotidyltransferase YdiU from Methylorubrum populi (strain ATCC BAA-705 / NCIMB 13946 / BJ001) (Methylobacterium populi).